A 175-amino-acid chain; its full sequence is Protein GrpE (175 aa).

Residues 1-35 are disordered; that stretch reads MSEQKQEIENENAQNSENLQDDLQDNEKNETNELQ. The segment covering 25–35 has biased composition (basic and acidic residues); it reads DNEKNETNELQ.

Belongs to the GrpE family. In terms of assembly, homodimer.

It is found in the cytoplasm. Its function is as follows. Participates actively in the response to hyperosmotic and heat shock by preventing the aggregation of stress-denatured proteins, in association with DnaK and GrpE. It is the nucleotide exchange factor for DnaK and may function as a thermosensor. Unfolded proteins bind initially to DnaJ; upon interaction with the DnaJ-bound protein, DnaK hydrolyzes its bound ATP, resulting in the formation of a stable complex. GrpE releases ADP from DnaK; ATP binding to DnaK triggers the release of the substrate protein, thus completing the reaction cycle. Several rounds of ATP-dependent interactions between DnaJ, DnaK and GrpE are required for fully efficient folding. The sequence is that of Protein GrpE from Campylobacter jejuni (strain RM1221).